The chain runs to 354 residues: Ferrochelatase (354 aa).

2 residues coordinate Fe cation: His204 and Glu306.

Belongs to the ferrochelatase family.

Its subcellular location is the cytoplasm. The catalysed reaction is heme b + 2 H(+) = protoporphyrin IX + Fe(2+). It functions in the pathway porphyrin-containing compound metabolism; protoheme biosynthesis; protoheme from protoporphyrin-IX: step 1/1. Functionally, catalyzes the ferrous insertion into protoporphyrin IX. In Coxiella burnetii (strain RSA 493 / Nine Mile phase I), this protein is Ferrochelatase.